Here is a 451-residue protein sequence, read N- to C-terminus: Histidinol dehydrogenase (451 aa).

The segment at 1–20 (MLNVTDLRGHTPSKSDIRRA) is disordered. Residues 7 to 19 (LRGHTPSKSDIRR) are compositionally biased toward basic and acidic residues. Residues Tyr-129, Gln-193, and Asn-218 each coordinate NAD(+). Positions 241, 263, and 266 each coordinate substrate. Zn(2+) contacts are provided by Gln-263 and His-266. Active-site proton acceptor residues include Glu-332 and His-333. The substrate site is built by His-333, Asp-366, Glu-420, and His-425. Asp-366 serves as a coordination point for Zn(2+). His-425 lines the Zn(2+) pocket.

The protein belongs to the histidinol dehydrogenase family. Requires Zn(2+) as cofactor.

The enzyme catalyses L-histidinol + 2 NAD(+) + H2O = L-histidine + 2 NADH + 3 H(+). The protein operates within amino-acid biosynthesis; L-histidine biosynthesis; L-histidine from 5-phospho-alpha-D-ribose 1-diphosphate: step 9/9. Functionally, catalyzes the sequential NAD-dependent oxidations of L-histidinol to L-histidinaldehyde and then to L-histidine. The polypeptide is Histidinol dehydrogenase (Corynebacterium efficiens (strain DSM 44549 / YS-314 / AJ 12310 / JCM 11189 / NBRC 100395)).